The chain runs to 353 residues: Phosphoribosylformylglycinamidine cyclo-ligase (353 aa).

The protein belongs to the AIR synthase family.

It localises to the cytoplasm. It catalyses the reaction 2-formamido-N(1)-(5-O-phospho-beta-D-ribosyl)acetamidine + ATP = 5-amino-1-(5-phospho-beta-D-ribosyl)imidazole + ADP + phosphate + H(+). The protein operates within purine metabolism; IMP biosynthesis via de novo pathway; 5-amino-1-(5-phospho-D-ribosyl)imidazole from N(2)-formyl-N(1)-(5-phospho-D-ribosyl)glycinamide: step 2/2. This is Phosphoribosylformylglycinamidine cyclo-ligase from Pseudomonas aeruginosa (strain LESB58).